The sequence spans 303 residues: N-acetyl-D-glucosamine kinase (303 aa).

ATP is bound by residues 4-11 (GFDIGGTK) and 133-140 (GVGGGLVF). Residues His-157, Cys-177, Cys-179, and Cys-184 each coordinate Zn(2+).

It belongs to the ROK (NagC/XylR) family. NagK subfamily.

It carries out the reaction N-acetyl-D-glucosamine + ATP = N-acetyl-D-glucosamine 6-phosphate + ADP + H(+). Its pathway is cell wall biogenesis; peptidoglycan recycling. Catalyzes the phosphorylation of N-acetyl-D-glucosamine (GlcNAc) derived from cell-wall degradation, yielding GlcNAc-6-P. This Shigella flexneri serotype 5b (strain 8401) protein is N-acetyl-D-glucosamine kinase.